The primary structure comprises 316 residues: tRNA dimethylallyltransferase (316 aa).

17–24 serves as a coordination point for ATP; sequence GPTASGKT. 19 to 24 serves as a coordination point for substrate; it reads TASGKT. Interaction with substrate tRNA regions lie at residues 42-45, 166-170, 247-252, and 280-287; these read DSAL, QRLSR, RCVGYR, and KRQITWLR.

It belongs to the IPP transferase family. In terms of assembly, monomer. The cofactor is Mg(2+).

It carries out the reaction adenosine(37) in tRNA + dimethylallyl diphosphate = N(6)-dimethylallyladenosine(37) in tRNA + diphosphate. In terms of biological role, catalyzes the transfer of a dimethylallyl group onto the adenine at position 37 in tRNAs that read codons beginning with uridine, leading to the formation of N6-(dimethylallyl)adenosine (i(6)A). The chain is tRNA dimethylallyltransferase from Cronobacter sakazakii (strain ATCC BAA-894) (Enterobacter sakazakii).